Consider the following 488-residue polypeptide: Probable glycine dehydrogenase (decarboxylating) subunit 2 (488 aa).

Lys274 carries the post-translational modification N6-(pyridoxal phosphate)lysine.

It belongs to the GcvP family. C-terminal subunit subfamily. As to quaternary structure, the glycine cleavage system is composed of four proteins: P, T, L and H. In this organism, the P 'protein' is a heterodimer of two subunits. Pyridoxal 5'-phosphate is required as a cofactor.

The catalysed reaction is N(6)-[(R)-lipoyl]-L-lysyl-[glycine-cleavage complex H protein] + glycine + H(+) = N(6)-[(R)-S(8)-aminomethyldihydrolipoyl]-L-lysyl-[glycine-cleavage complex H protein] + CO2. Functionally, the glycine cleavage system catalyzes the degradation of glycine. The P protein binds the alpha-amino group of glycine through its pyridoxal phosphate cofactor; CO(2) is released and the remaining methylamine moiety is then transferred to the lipoamide cofactor of the H protein. This chain is Probable glycine dehydrogenase (decarboxylating) subunit 2, found in Listeria monocytogenes serotype 4a (strain HCC23).